We begin with the raw amino-acid sequence, 602 residues long: Aspartate--tRNA(Asp/Asn) ligase (602 aa).

An L-aspartate-binding site is contributed by glutamate 170. The tract at residues 194 to 197 (QLFK) is aspartate. Arginine 216 provides a ligand contact to L-aspartate. ATP-binding positions include 216 to 218 (RDE) and glutamine 225. L-aspartate is bound at residue histidine 448. Glutamate 482 is an ATP binding site. Residue arginine 489 coordinates L-aspartate. 534–537 (GWDR) contributes to the ATP binding site. The segment at 559-602 (GGVDPLTDAPAPISAQQRKESGIDAKPEKKSEDKKSEGDTAEAK) is disordered. Residues 575–602 (QRKESGIDAKPEKKSEDKKSEGDTAEAK) are compositionally biased toward basic and acidic residues.

The protein belongs to the class-II aminoacyl-tRNA synthetase family. Type 1 subfamily. Homodimer.

It is found in the cytoplasm. It carries out the reaction tRNA(Asx) + L-aspartate + ATP = L-aspartyl-tRNA(Asx) + AMP + diphosphate. Functionally, aspartyl-tRNA synthetase with relaxed tRNA specificity since it is able to aspartylate not only its cognate tRNA(Asp) but also tRNA(Asn). Reaction proceeds in two steps: L-aspartate is first activated by ATP to form Asp-AMP and then transferred to the acceptor end of tRNA(Asp/Asn). The chain is Aspartate--tRNA(Asp/Asn) ligase from Rhodococcus erythropolis (strain PR4 / NBRC 100887).